The primary structure comprises 540 residues: Na(+)/H(+) antiporter NhaS2 (540 aa).

10 helical membrane passes run 29-49 (ITTL…VALV), 71-91 (GLSV…ILIF), 117-137 (VVIS…LAWV), 138-158 (TAAG…IAAF), 207-227 (IFVA…LCVG), 256-276 (LGVS…NLAL), 296-316 (FGVN…SILL), 323-343 (LIAI…LLYL), 358-378 (VLIA…ALPL), and 389-409 (LVFS…PWVV).

This sequence belongs to the monovalent cation:proton antiporter 1 (CPA1) transporter (TC 2.A.36) family.

The protein localises to the cell membrane. In terms of biological role, required for Na(+) uptake into the cell, especially at low external Na(+) concentrations or low Na(+)/K(+) ratios. May be part of a sodium cycle that permits re-entry of sodium into the cell. The polypeptide is Na(+)/H(+) antiporter NhaS2 (nhaS2) (Synechocystis sp. (strain ATCC 27184 / PCC 6803 / Kazusa)).